A 402-amino-acid polypeptide reads, in one-letter code: E3 ubiquitin-protein ligase MARCHF11 (402 aa).

The segment covering 1-11 (MSFEGGHGGSR) has biased composition (gly residues). Positions 1–161 (MSFEGGHGGS…SGGGDQRAGH (161 aa)) are disordered. Residues 21 to 56 (EPPPQPPPPPPPTPPPGEPAPVPAAPRYLPPLPASP) are compositionally biased toward pro residues. Over residues 111 to 124 (EAAAAKGGPGESEA) the composition is skewed to low complexity. An RING-CH-type zinc finger spans residues 162–222 (QHQHHQPICK…ELCCYRYHVI (61 aa)). Residues C170, C173, C186, C188, H196, C199, C212, and C215 each coordinate Zn(2+). The next 2 helical transmembrane spans lie at 245–265 (MIAV…LLWS) and 278–298 (ILFQ…IGLI). The YXXL motif motif lies at 371-374 (YVLL). The PDZ-binding signature appears at 399-402 (VTSV).

In terms of assembly, interacts (YXXL motif) with AP1M1. Interacts (via PDZ-binding motif) with LIN7A. Interacts with unidentified fucose glycoproteins.

The protein localises to the cytoplasmic vesicle membrane. The catalysed reaction is S-ubiquitinyl-[E2 ubiquitin-conjugating enzyme]-L-cysteine + [acceptor protein]-L-lysine = [E2 ubiquitin-conjugating enzyme]-L-cysteine + N(6)-ubiquitinyl-[acceptor protein]-L-lysine.. It participates in protein modification; protein ubiquitination. Functionally, E3 ubiquitin-protein ligase that mediates polyubiquitination of CD4. E3 ubiquitin ligases accept ubiquitin from an E2 ubiquitin-conjugating enzyme in the form of a thioester and then directly transfer the ubiquitin to targeted substrates. May play a role in ubuquitin-dependent protein sorting in developmenting spermatids. The protein is E3 ubiquitin-protein ligase MARCHF11 of Homo sapiens (Human).